Reading from the N-terminus, the 382-residue chain is MLLPWIITIVTVIPATLGHRNRVQDDEMLVISDSTDSLNLEDFEFADKLTREELFGKHIPVEVVNDFKSDIRLPRRHKRNGVSRAAKLWPNARIPYAISPHYSPHERALLAKAVKQYHEKTCIRFVPRQTGEPDYLFIGKVDGCFSEVGRTSGVQVLSLDNGCMEYATIIHEMMHVVGFYHEHERWDRDNFIDIIWQNIDRGALDQFGKVDLSKTSYYGQPYDYKSILHYDSLAFSKNGFPTMLPKVKSATIGNARDFSDVDISKINRMYNCPVEKSVTAPFARARHVPIYSPQYHKYEDRPKIPLRSFDMQQGPINPPMAQIPSQSLVVSSSSGRVNYNSNKPSSQCEDRITVCWWTADRCRSPAIYQVMSSLCPKTCKFC.

An N-terminal signal peptide occupies residues 1-18 (MLLPWIITIVTVIPATLG). A propeptide spanning residues 19-79 (HRNRVQDDEM…DIRLPRRHKR (61 aa)) is cleaved from the precursor. The 194-residue stretch at 80 to 273 (NGVSRAAKLW…SKINRMYNCP (194 aa)) folds into the Peptidase M12A domain. Intrachain disulfides connect Cys-122–Cys-272, Cys-144–Cys-163, Cys-348–Cys-382, Cys-355–Cys-375, and Cys-362–Cys-379. His-171 is a Zn(2+) binding site. Glu-172 is an active-site residue. The Zn(2+) site is built by His-175 and His-181. The 35-residue stretch at 348–382 (CEDRITVCWWTADRCRSPAIYQVMSSLCPKTCKFC) folds into the ShKT domain.

It depends on Zn(2+) as a cofactor. Expressed in the head of adult hermaphrodites but not within pharynx cells. Expressed in pharyngeal muscles, mc cells, intestine, hypodermal seam cells, arcade cells, spermatheca, vulva and rectal epithelial cells.

The protein localises to the secreted. In terms of biological role, metalloprotease. The protein is Zinc metalloproteinase nas-7 (nas-7) of Caenorhabditis elegans.